The sequence spans 348 residues: Holliday junction branch migration complex subunit RuvB (348 aa).

The tract at residues 1–20 (MKPPARMVSPERRSDDVGDT) is disordered. The segment at 1–183 (MKPPARMVSP…FGIPIRLNFY (183 aa)) is large ATPase domain (RuvB-L). Residues L22, R23, G64, K67, T68, T69, 130-132 (EDF), R173, Y183, and R220 each bind ATP. T68 serves as a coordination point for Mg(2+). Positions 184–254 (TVEELEGIVT…IADHALSALE (71 aa)) are small ATPAse domain (RuvB-S). The interval 257–348 (AAGLDAMDRR…QIGLFGNDDD (92 aa)) is head domain (RuvB-H). DNA is bound by residues R293, R312, and R317.

The protein belongs to the RuvB family. In terms of assembly, homohexamer. Forms an RuvA(8)-RuvB(12)-Holliday junction (HJ) complex. HJ DNA is sandwiched between 2 RuvA tetramers; dsDNA enters through RuvA and exits via RuvB. An RuvB hexamer assembles on each DNA strand where it exits the tetramer. Each RuvB hexamer is contacted by two RuvA subunits (via domain III) on 2 adjacent RuvB subunits; this complex drives branch migration. In the full resolvosome a probable DNA-RuvA(4)-RuvB(12)-RuvC(2) complex forms which resolves the HJ.

It localises to the cytoplasm. It catalyses the reaction ATP + H2O = ADP + phosphate + H(+). Its function is as follows. The RuvA-RuvB-RuvC complex processes Holliday junction (HJ) DNA during genetic recombination and DNA repair, while the RuvA-RuvB complex plays an important role in the rescue of blocked DNA replication forks via replication fork reversal (RFR). RuvA specifically binds to HJ cruciform DNA, conferring on it an open structure. The RuvB hexamer acts as an ATP-dependent pump, pulling dsDNA into and through the RuvAB complex. RuvB forms 2 homohexamers on either side of HJ DNA bound by 1 or 2 RuvA tetramers; 4 subunits per hexamer contact DNA at a time. Coordinated motions by a converter formed by DNA-disengaged RuvB subunits stimulates ATP hydrolysis and nucleotide exchange. Immobilization of the converter enables RuvB to convert the ATP-contained energy into a lever motion, pulling 2 nucleotides of DNA out of the RuvA tetramer per ATP hydrolyzed, thus driving DNA branch migration. The RuvB motors rotate together with the DNA substrate, which together with the progressing nucleotide cycle form the mechanistic basis for DNA recombination by continuous HJ branch migration. Branch migration allows RuvC to scan DNA until it finds its consensus sequence, where it cleaves and resolves cruciform DNA. This chain is Holliday junction branch migration complex subunit RuvB, found in Bradyrhizobium sp. (strain ORS 278).